The sequence spans 532 residues: Probable rhamnogalacturonase B (532 aa).

A signal peptide spans 1–21 (MRINTLSLFSLVSLVPTLALA). An intrachain disulfide couples Cys42 to Cys68. The active-site Proton donor is Asp219. Residues Cys221 and Cys238 are joined by a disulfide bond. Asn239 carries N-linked (GlcNAc...) asparagine glycosylation. His294 is an active-site residue. Asn321 carries an N-linked (GlcNAc...) asparagine glycan. Intrachain disulfides connect Cys344–Cys350 and Cys374–Cys383. 2 stretches are compositionally biased toward low complexity: residues 466–475 (TVAAATSTPA) and 490–499 (QPSQQSPGQS). The tract at residues 466–532 (TVAAATSTPA…HRHHQRHGHH (67 aa)) is disordered. Basic residues predominate over residues 521–532 (AGHRHHQRHGHH).

It belongs to the glycosyl hydrolase 28 family.

Its subcellular location is the secreted. The enzyme catalyses Endohydrolysis of alpha-D-GalA-(1-&gt;2)-alpha-L-Rha glycosidic bond in the rhamnogalacturonan I backbone with initial inversion of anomeric configuration releasing oligosaccharides with beta-D-GalA at the reducing end.. Its function is as follows. Pectinolytic enzymes consist of four classes of enzymes: pectine lyase, polygalacturonase, pectin methylesterase and rhamnogalacturonase. Hydrolyzes alpha-D-galacturonopyranosyl-(1,2)-alpha-L-rhamnopyranosyl linkages in the backbone of the hairy regions of pectins. This is Probable rhamnogalacturonase B (rhgB) from Aspergillus oryzae (strain ATCC 42149 / RIB 40) (Yellow koji mold).